A 418-amino-acid chain; its full sequence is Alpha-1-antitrypsin (418 aa).

The N-terminal stretch at 1 to 24 is a signal peptide; sequence MPSSVSWGILLLAGLCCLVPVSLA. S38 carries the phosphoserine modification. N-linked (GlcNAc...) asparagine glycosylation is found at N70, N107, and N271. Residues 373–392 are RCL; it reads GAMFLEAIPMSIPPEVKFNK. At S383 the chain carries Phosphoserine.

This sequence belongs to the serpin family. In terms of assembly, interacts with CELA2A. Interacts with ERGIC3 and LMAN1/ERGIC53. Interacts with PRSS1/Trypsin. Plasma.

The protein localises to the secreted. In terms of biological role, inhibitor of serine proteases. Its primary target is elastase, but it also has a moderate affinity for plasmin and thrombin. Inhibits trypsin, chymotrypsin and plasminogen activator. In Pongo abelii (Sumatran orangutan), this protein is Alpha-1-antitrypsin (SERPINA1).